A 275-amino-acid polypeptide reads, in one-letter code: Light-independent protochlorophyllide reductase iron-sulfur ATP-binding protein (275 aa).

ATP-binding positions include 12-17 and Lys-41; that span reads GIGKST. Ser-16 provides a ligand contact to Mg(2+). The [4Fe-4S] cluster site is built by Cys-97 and Cys-131. Residue 182–183 coordinates ATP; it reads NR.

Belongs to the NifH/BchL/ChlL family. Homodimer. Protochlorophyllide reductase is composed of three subunits; BchL, BchN and BchB. [4Fe-4S] cluster serves as cofactor.

The enzyme catalyses chlorophyllide a + oxidized 2[4Fe-4S]-[ferredoxin] + 2 ADP + 2 phosphate = protochlorophyllide a + reduced 2[4Fe-4S]-[ferredoxin] + 2 ATP + 2 H2O. Its pathway is porphyrin-containing compound metabolism; bacteriochlorophyll biosynthesis (light-independent). Component of the dark-operative protochlorophyllide reductase (DPOR) that uses Mg-ATP and reduced ferredoxin to reduce ring D of protochlorophyllide (Pchlide) to form chlorophyllide a (Chlide). This reaction is light-independent. The L component serves as a unique electron donor to the NB-component of the complex, and binds Mg-ATP. This chain is Light-independent protochlorophyllide reductase iron-sulfur ATP-binding protein, found in Chlorobium phaeobacteroides (strain DSM 266 / SMG 266 / 2430).